The chain runs to 338 residues: Ketol-acid reductoisomerase (NADP(+)) (338 aa).

Residues 1-181 (MQVYYDKDCD…GGGRTGIIET (181 aa)) form the KARI N-terminal Rossmann domain. Residues 24–27 (YGSQ), arginine 47, serine 50, serine 52, and 82–85 (DEFQ) each bind NADP(+). The active site involves histidine 107. An NADP(+)-binding site is contributed by glycine 133. Positions 182-327 (TFKDETETDL…EKLRAMMPWI (146 aa)) constitute a KARI C-terminal knotted domain. 4 residues coordinate Mg(2+): aspartate 190, glutamate 194, glutamate 226, and glutamate 230. Serine 251 contacts substrate.

This sequence belongs to the ketol-acid reductoisomerase family. The cofactor is Mg(2+).

The catalysed reaction is (2R)-2,3-dihydroxy-3-methylbutanoate + NADP(+) = (2S)-2-acetolactate + NADPH + H(+). The enzyme catalyses (2R,3R)-2,3-dihydroxy-3-methylpentanoate + NADP(+) = (S)-2-ethyl-2-hydroxy-3-oxobutanoate + NADPH + H(+). It participates in amino-acid biosynthesis; L-isoleucine biosynthesis; L-isoleucine from 2-oxobutanoate: step 2/4. The protein operates within amino-acid biosynthesis; L-valine biosynthesis; L-valine from pyruvate: step 2/4. Its function is as follows. Involved in the biosynthesis of branched-chain amino acids (BCAA). Catalyzes an alkyl-migration followed by a ketol-acid reduction of (S)-2-acetolactate (S2AL) to yield (R)-2,3-dihydroxy-isovalerate. In the isomerase reaction, S2AL is rearranged via a Mg-dependent methyl migration to produce 3-hydroxy-3-methyl-2-ketobutyrate (HMKB). In the reductase reaction, this 2-ketoacid undergoes a metal-dependent reduction by NADPH to yield (R)-2,3-dihydroxy-isovalerate. The polypeptide is Ketol-acid reductoisomerase (NADP(+)) (Teredinibacter turnerae (strain ATCC 39867 / T7901)).